Here is a 348-residue protein sequence, read N- to C-terminus: Heat-inducible transcription repressor HrcA (348 aa).

It belongs to the HrcA family.

Functionally, negative regulator of class I heat shock genes (grpE-dnaK-dnaJ and groELS operons). Prevents heat-shock induction of these operons. This chain is Heat-inducible transcription repressor HrcA, found in Pelotomaculum thermopropionicum (strain DSM 13744 / JCM 10971 / SI).